An 806-amino-acid polypeptide reads, in one-letter code: ATP-dependent zinc metalloprotease FTSH 11, chloroplastic/mitochondrial (806 aa).

The transit peptide at 1–63 (MSSSTLQASL…RFRPLPCSLR (63 aa)) directs the protein to the chloroplast and mitochondrion. A compositionally biased stretch (basic and acidic residues) spans 106–116 (FVGGEETKSGG). Positions 106–130 (FVGGEETKSGGEEAEVSNGVTEGKE) are disordered. The helical transmembrane segment at 301 to 321 (LVSTILFTVAVGLVWIMGAAA) threads the bilayer. 402–409 (GAPGTGKT) lines the ATP pocket. His620 lines the Zn(2+) pocket. Glu621 is a catalytic residue. Positions 624 and 698 each coordinate Zn(2+).

The protein in the N-terminal section; belongs to the AAA ATPase family. This sequence in the C-terminal section; belongs to the peptidase M41 family. In terms of assembly, homooligomer. The cofactor is Zn(2+).

The protein localises to the mitochondrion inner membrane. The protein resides in the plastid. It localises to the chloroplast thylakoid membrane. Its function is as follows. Probable ATP-dependent zinc metallopeptidase. Involved in the assembly and/or stability of the complexes I and V. Involved in thermotolerance but not in high light stress resistance or in the assembly/stability of the complexes I and V of the mitochondrial oxidative phosphorylation system. The sequence is that of ATP-dependent zinc metalloprotease FTSH 11, chloroplastic/mitochondrial (FTSH11) from Arabidopsis thaliana (Mouse-ear cress).